Here is an 800-residue protein sequence, read N- to C-terminus: DNA topoisomerase 4 subunit A (800 aa).

One can recognise a Topo IIA-type catalytic domain in the interval 31–495 (LPDVRDGLKP…EIEEIKIDKE (465 aa)). Tyr119 functions as the O-(5'-phospho-DNA)-tyrosine intermediate in the catalytic mechanism.

The protein belongs to the type II topoisomerase GyrA/ParC subunit family. ParC type 2 subfamily. In terms of assembly, heterotetramer composed of ParC and ParE.

It localises to the cell membrane. The catalysed reaction is ATP-dependent breakage, passage and rejoining of double-stranded DNA.. Functionally, topoisomerase IV is essential for chromosome segregation. It relaxes supercoiled DNA. Performs the decatenation events required during the replication of a circular DNA molecule. This is DNA topoisomerase 4 subunit A from Staphylococcus aureus (strain MRSA252).